A 236-amino-acid chain; its full sequence is MHRLISRLRAFFQRKADPKEAKEERQKLLEDATSLQNKQGVVAGSCSNYDCMTKHTRSSADVETGDNPLKAEPNLPAAVEEQSPRGLNAVTVDNDHDEEPSESHMRILLASITSLVGDADYNGHGFSFSLDIACKDFKPYNGDLVEIEFSDEQDTQSRRAILVKPLKHCHLNEVRVTRTDGSTGVLEDTIFFTLDSLKLPSGYVPQPDDVVNVVAVQSMQSNYFWRAVAMTPVQVL.

The interval 57 to 84 is disordered; the sequence is RSSADVETGDNPLKAEPNLPAAVEEQSP.

Interacts with GABARAP; this interaction may be important for GABARAP protein stability. Interacts with LAMP2; this interaction may be important for LAMP2 protein stability. As to expression, expressed in spermatozoa (at protein level).

Its subcellular location is the cytoplasm. The protein localises to the cytoplasmic vesicle. The protein resides in the secretory vesicle. It is found in the acrosome. It localises to the cell projection. Its subcellular location is the cilium. The protein localises to the flagellum. Its function is as follows. Plays a role in spermatogenesis, possibly acting in the regulation of the autophagy pathway. This chain is Cancer/testis antigen 55 (Ct55), found in Mus musculus (Mouse).